Reading from the N-terminus, the 347-residue chain is MKPPIFFLIMSTVISGTLIVMTSSHWMLTWIGFEMNMLAIIPILMKKFNPRSMEASTKYFLTQATASMLLMMGIIINLLYSGQWTVPNNPNPMASILMTTALAMKLGLAPFHFWVPEVTQGIPLSSGMILLTWQKIAPLSVLYQISPTINPNLLLPMATLSVLIGGWGGLNQTQLRKILAYSSIAHMGWMTAILLYNPTMMILNLTIYIIMTLTTFMLFMLNSTTTTLSLSQTWNKMPLITSLITMLMLSLGGLPPLSGFMPKWMIIQELTKNEMIIMPTFLAITALLNLYFYMRLTYATALTMFPSTNNMKMKWQFESTKKMTFLPPLIITSTMLLPLTPMISILD.

11 helical membrane passes run 3-23, 25-45, 59-79, 96-116, 122-142, 149-169, 178-198, 201-221, 237-257, 274-294, and 325-345; these read PPIF…VMTS, HWML…PILM, YFLT…INLL, ILMT…FWVP, IPLS…LSVL, INPN…GWGG, ILAY…LYNP, MILN…LFML, MPLI…LPPL, EMII…YFYM, and FLPP…MISI.

The protein belongs to the complex I subunit 2 family. Core subunit of respiratory chain NADH dehydrogenase (Complex I) which is composed of 45 different subunits. Interacts with TMEM242.

The protein localises to the mitochondrion inner membrane. The catalysed reaction is a ubiquinone + NADH + 5 H(+)(in) = a ubiquinol + NAD(+) + 4 H(+)(out). Its function is as follows. Core subunit of the mitochondrial membrane respiratory chain NADH dehydrogenase (Complex I) which catalyzes electron transfer from NADH through the respiratory chain, using ubiquinone as an electron acceptor. Essential for the catalytic activity and assembly of complex I. This Genetta servalina (Servaline genet) protein is NADH-ubiquinone oxidoreductase chain 2.